A 347-amino-acid polypeptide reads, in one-letter code: MNPMIFIILLATIMLGSSIVMMSSHWFMTWLGFEMNMMAIVPVLMKKYSPRSMEAATKYFLTQATASMILMLAIIINLMYSGQWTIANMENHTASMLITIALVMKLGLAPFHFWVPEVTQGIPLSSGLILLTWQKIAPLSLLYQIHSSINMELFLTMSLLSIVIGGWGGLNQTQLRKIMAYSSIGHMGWMMAIMNYNPNLSFLNLLVYILMTSSMFALLIFSSTTSTLSLSLAWNKTPIIATMSLIILLSLGGLPPLTGFMPKWMIIQELTKNNSTILPTLMAISALLNLFFYIRLTYSTALTMFPTMNNMKLTWQFQNTNILPMILPLITISTLALPLTPLFLMLN.

The next 10 helical transmembrane spans lie at 3–23 (PMIFIILLATIMLGSSIVMMS), 25–45 (HWFMTWLGFEMNMMAIVPVLM), 59–79 (YFLTQATASMILMLAIIINLM), 96–116 (MLITIALVMKLGLAPFHFWVP), 122–142 (IPLSSGLILLTWQKIAPLSLL), 149–169 (INMELFLTMSLLSIVIGGWGG), 201–221 (SFLNLLVYILMTSSMFALLIF), 239–259 (IIATMSLIILLSLGGLPPLTG), 274–294 (NSTILPTLMAISALLNLFFYI), and 326–346 (ILPLITISTLALPLTPLFLML).

It belongs to the complex I subunit 2 family. In terms of assembly, core subunit of respiratory chain NADH dehydrogenase (Complex I) which is composed of 45 different subunits. Interacts with TMEM242.

The protein localises to the mitochondrion inner membrane. It carries out the reaction a ubiquinone + NADH + 5 H(+)(in) = a ubiquinol + NAD(+) + 4 H(+)(out). Its function is as follows. Core subunit of the mitochondrial membrane respiratory chain NADH dehydrogenase (Complex I) that is believed to belong to the minimal assembly required for catalysis. Complex I functions in the transfer of electrons from NADH to the respiratory chain. The immediate electron acceptor for the enzyme is believed to be ubiquinone. This chain is NADH-ubiquinone oxidoreductase chain 2, found in Crocidura hildegardeae (Hildegarde's shrew).